The following is a 143-amino-acid chain: AP-2 complex subunit sigma (143 aa).

Belongs to the adaptor complexes small subunit family. As to quaternary structure, adaptor protein complex 2 (AP-2) is a heterotetramer composed of two large adaptins (alpha-type subunit APL3 and beta-type subunit APL1), a medium chain (mu-type subunit APM4) and a small adaptin (sigma-type subunit APS2).

The protein localises to the cell membrane. It localises to the membrane. It is found in the coated pit. In terms of biological role, component of the adaptor complexes which link clathrin to receptors in coated vesicles. Clathrin-associated protein complexes are believed to interact with the cytoplasmic tails of membrane proteins, leading to their selection and concentration. In Gibberella zeae (strain ATCC MYA-4620 / CBS 123657 / FGSC 9075 / NRRL 31084 / PH-1) (Wheat head blight fungus), this protein is AP-2 complex subunit sigma (APS2).